The primary structure comprises 614 residues: Interleukin-18 receptor accessory protein (614 aa).

Positions 1-19 (MLCLGWVFLWFVAGEKTTG) are cleaved as a signal peptide. Over 20–356 (FNHSACATKK…RTIRLRKKEE (337 aa)) the chain is Extracellular. Asn-21 carries N-linked (GlcNAc...) asparagine glycosylation. Residues Cys-46 and Cys-126 are joined by a disulfide bond. The interval 59–78 (ASQLSPTQSPAHKPCSGSQK) is disordered. Ig-like C2-type domains follow at residues 148 to 234 (PQRN…WTVR) and 250 to 352 (PEIL…IRLR). Asn-151 carries N-linked (GlcNAc...) asparagine glycosylation. Intrachain disulfides connect Cys-154–Cys-179, Cys-174–Cys-220, and Cys-179–Cys-220. The N-linked (GlcNAc...) asparagine glycan is linked to Asn-227. An intrachain disulfide couples Cys-272 to Cys-336. A glycan (N-linked (GlcNAc...) asparagine) is linked at Asn-344. Residues 357-377 (VVFVYILLGTALMLVGVLVAA) traverse the membrane as a helical segment. The Cytoplasmic portion of the chain corresponds to 378-614 (AFLYWYWIEV…LLLYSDQKRC (237 aa)). Positions 405-558 (KEFDAFVSYS…RFWTQIRYHM (154 aa)) constitute a TIR domain. Glu-492 is an active-site residue.

The protein belongs to the interleukin-1 receptor family. As to quaternary structure, forms a ternary complex with IL18 and IL18R1. Within this complex, IL18R1 is involved in ligand-binding and IL18RAP in signaling leading to NF-kappa-B and JNK activation.

It is found in the cell membrane. The enzyme catalyses NAD(+) + H2O = ADP-D-ribose + nicotinamide + H(+). Its function is as follows. Within the IL18 receptor complex, does not mediate IL18-binding, but involved in IL18-dependent signal transduction, leading to NF-kappa-B and JNK activation. May play a role in IL18-mediated IFNG synthesis from T-helper 1 (Th1) cells. In Mus musculus (Mouse), this protein is Interleukin-18 receptor accessory protein.